Here is a 416-residue protein sequence, read N- to C-terminus: Enterobactin exporter EntS (416 aa).

Topologically, residues 1-21 (MNKQSWLLNLSLLKTHPAFRA) are cytoplasmic. A helical transmembrane segment spans residues 22–42 (VFLARFISIVSLGLLGVAVPV). The Periplasmic portion of the chain corresponds to 43 to 55 (QIQMMTHSTWQVG). A helical membrane pass occupies residues 56 to 76 (LSVTLTGGAMFVGLMVGGVLA). Over 77–83 (DRYERKK) the chain is Cytoplasmic. Residues 84–104 (VILLARGTCGIGFIGLCLNAL) traverse the membrane as a helical segment. At 105–109 (LPEPS) the chain is on the periplasmic side. The helical transmembrane segment at 110 to 130 (LLAIYLLGLWDGFFASLGVTA) threads the bilayer. The Cytoplasmic portion of the chain corresponds to 131–156 (LLAATPALVGRENLMQAGAITMLTVR). The chain crosses the membrane as a helical span at residues 157-177 (LGSVISPMIGGLLLATGGVAW). Asparagine 178 is a topological domain (periplasmic). The helical transmembrane segment at 179–199 (YGLAAAGTFITLLPLLSLPAL) threads the bilayer. Topologically, residues 200 to 218 (PPPPQPREHPLKSLLAGFR) are cytoplasmic. Residues 219–239 (FLLASPLVGGIALLGGLLTMA) traverse the membrane as a helical segment. Residues 240-256 (SAVRVLYPALADNWQMS) are Periplasmic-facing. The helical transmembrane segment at 257-277 (AAQIGFLYAAIPLGAAIGALT) threads the bilayer. The Cytoplasmic segment spans residues 278–287 (SGKLAHSVRP). The helical transmembrane segment at 288–307 (GLLMLLSTLGAFLAIGLFGL) threads the bilayer. The Periplasmic portion of the chain corresponds to 308–313 (MPMWIL). Residues 314–336 (GVVCLALFGWLSAVSSLLQYTML) traverse the membrane as a helical segment. Residues 337 to 356 (QTQTPEAMLGRINGLWTAQN) lie on the Cytoplasmic side of the membrane. Residues 357-377 (VTGDAIGAALLGGLGAMMTPV) traverse the membrane as a helical segment. Alanine 378 is a topological domain (periplasmic). Residues 379 to 399 (SASASGFGLLIIGVLLLLVLV) form a helical membrane-spanning segment. Residues 400-416 (ELRRFRQTPPQVTASDS) lie on the Cytoplasmic side of the membrane.

The protein belongs to the major facilitator superfamily. EntS (TC 2.A.1.38) family.

It is found in the cell inner membrane. Component of an export pathway for enterobactin. The polypeptide is Enterobactin exporter EntS (Escherichia coli O6:H1 (strain CFT073 / ATCC 700928 / UPEC)).